The primary structure comprises 224 residues: Large ribosomal subunit protein uL1c (224 aa).

The protein belongs to the universal ribosomal protein uL1 family. In terms of assembly, part of the 50S ribosomal subunit.

Its subcellular location is the plastid. The protein resides in the chloroplast. Its function is as follows. Binds directly to 23S rRNA. Might be involved in E site tRNA release (Potential). This chain is Large ribosomal subunit protein uL1c (rpl1), found in Cyanidioschyzon merolae (strain NIES-3377 / 10D) (Unicellular red alga).